We begin with the raw amino-acid sequence, 652 residues long: Na(+)/H(+) antiporter NhaA 1 (652 aa).

Residues 1-427 (MTGELPRGRR…VGASLTTWLV (427 aa)) are na(+)/H(+) antiporter NhaA. A run of 11 helical transmembrane segments spans residues 27 to 47 (AFLHTETGSARVLLAAAVVAL), 78 to 98 (LRYWVNSGLMTFFFLVIGLEV), 114 to 134 (TLPLLAGIGGILVPIAIYLAF), 142 to 162 (VGWGVVMATDTALALGMLAVL), 173 to 193 (FLLTVAVVDDLIVIAVLAIAY), 200 to 220 (TALFVAAGIFALVLLIRAAGG), 227 to 247 (LLLGVAAWLAVSESGVDPVVV), 312 to 332 (LIVPLFALANVGVVVDGELLA), 343 to 363 (VLFAYVVGKPAGIVIASMLVA), 376 to 396 (WAAIIGVGTVSGIGFTIALLI), and 411 to 431 (IGILVATVGASLTTWLVFRLA). A Thioredoxin domain is found at 428–623 (FRLAARLPPA…LSAAVTSAFA (196 aa)). A disordered region spans residues 626 to 652 (RLRPRDDREPDRRREVGSEQPDEEPGT). A compositionally biased stretch (basic and acidic residues) spans 628–642 (RPRDDREPDRRREVG).

It in the N-terminal section; belongs to the NhaA Na(+)/H(+) (TC 2.A.33) antiporter family.

It is found in the cell membrane. It catalyses the reaction Na(+)(in) + 2 H(+)(out) = Na(+)(out) + 2 H(+)(in). In terms of biological role, na(+)/H(+) antiporter that extrudes sodium in exchange for external protons. This is Na(+)/H(+) antiporter NhaA 1 from Salinispora arenicola (strain CNS-205).